The primary structure comprises 250 residues: Ribonuclease HII (250 aa).

The 185-residue stretch at 66–250 folds into the RNase H type-2 domain; that stretch reads ELVAGVDEVG…TFAPVSDFFK (185 aa). 3 residues coordinate a divalent metal cation: Asp-72, Glu-73, and Asp-164.

It belongs to the RNase HII family. Mn(2+) is required as a cofactor. Requires Mg(2+) as cofactor.

The protein localises to the cytoplasm. The enzyme catalyses Endonucleolytic cleavage to 5'-phosphomonoester.. Its function is as follows. Endonuclease that specifically degrades the RNA of RNA-DNA hybrids. This Lactobacillus helveticus (strain DPC 4571) protein is Ribonuclease HII.